We begin with the raw amino-acid sequence, 376 residues long: uncharacterized protein (376 aa).

Belongs to the YCR102c/YLR460c/YNL134c family.

This is an uncharacterized protein from Saccharomyces cerevisiae (strain ATCC 204508 / S288c) (Baker's yeast).